Consider the following 339-residue polypeptide: Glycerol-3-phosphate dehydrogenase [NAD(P)+] (339 aa).

NADPH contacts are provided by Ser-11, Trp-12, and Lys-109. Sn-glycerol 3-phosphate contacts are provided by Lys-109, Gly-140, and Ser-142. Ala-144 provides a ligand contact to NADPH. Sn-glycerol 3-phosphate is bound by residues Lys-195, Asp-249, Ser-259, Arg-260, and Asn-261. Lys-195 (proton acceptor) is an active-site residue. NADPH is bound at residue Arg-260. 2 residues coordinate NADPH: Val-284 and Glu-286.

It belongs to the NAD-dependent glycerol-3-phosphate dehydrogenase family.

It is found in the cytoplasm. The enzyme catalyses sn-glycerol 3-phosphate + NAD(+) = dihydroxyacetone phosphate + NADH + H(+). The catalysed reaction is sn-glycerol 3-phosphate + NADP(+) = dihydroxyacetone phosphate + NADPH + H(+). It participates in membrane lipid metabolism; glycerophospholipid metabolism. Its function is as follows. Catalyzes the reduction of the glycolytic intermediate dihydroxyacetone phosphate (DHAP) to sn-glycerol 3-phosphate (G3P), the key precursor for phospholipid synthesis. This Lactobacillus helveticus (strain DPC 4571) protein is Glycerol-3-phosphate dehydrogenase [NAD(P)+].